The primary structure comprises 320 residues: Cytochrome f (320 aa).

A signal peptide spans 1 to 35 (MQTRNTFSWIREEITRSISVSLMIYIITWASISGA). The heme site is built by tyrosine 36, cysteine 56, cysteine 59, and histidine 60. Residues 286–306 (VQGLLFFLGSVVLAQIFLVLK) traverse the membrane as a helical segment.

This sequence belongs to the cytochrome f family. As to quaternary structure, the 4 large subunits of the cytochrome b6-f complex are cytochrome b6, subunit IV (17 kDa polypeptide, petD), cytochrome f and the Rieske protein, while the 4 small subunits are PetG, PetL, PetM and PetN. The complex functions as a dimer. The cofactor is heme.

Its subcellular location is the plastid. The protein resides in the chloroplast thylakoid membrane. Functionally, component of the cytochrome b6-f complex, which mediates electron transfer between photosystem II (PSII) and photosystem I (PSI), cyclic electron flow around PSI, and state transitions. The sequence is that of Cytochrome f from Capsella bursa-pastoris (Shepherd's purse).